A 583-amino-acid polypeptide reads, in one-letter code: Trehalase (583 aa).

The signal sequence occupies residues 1 to 23 (MPGRTWELCLLLLLGLGLGSQEA). A glycan (N-linked (GlcNAc...) asparagine) is linked at Asn78. Residues Arg168, 175–176 (WD), Asn212, and 221–223 (RSQ) contribute to the substrate site. 2 N-linked (GlcNAc...) asparagine glycosylation sites follow: Asn239 and Asn261. Residues 286–288 (RPE) and Gly319 each bind substrate. Catalysis depends on Asp321, which acts as the Proton donor/acceptor. Residue Asn369 is glycosylated (N-linked (GlcNAc...) asparagine). The Proton donor/acceptor role is filled by Glu514. Substrate is bound at residue Glu529. Ser556 carries the GPI-anchor amidated serine lipid modification. The propeptide at 557–583 (GAKLAFLEPHCLAATLLPSLLLSLLPW) is removed in mature form.

Belongs to the glycosyl hydrolase 37 family. Homodimer; disulfide-linked. Expressed in kidney, liver and small intestine. Also more weakly expressed in pancreas.

The protein resides in the cell membrane. The catalysed reaction is alpha,alpha-trehalose + H2O = alpha-D-glucose + beta-D-glucose. Functionally, intestinal trehalase is probably involved in the hydrolysis of ingested trehalose. This is Trehalase from Homo sapiens (Human).